We begin with the raw amino-acid sequence, 101 residues long: ATP synthase subunit c (101 aa).

2 helical membrane-spanning segments follow: residues 31 to 51 and 81 to 101; these read AFAYLGAGLAMIGVIGVGAGQ and AISETSSIYALLVALILIFVG.

The protein belongs to the ATPase C chain family. In terms of assembly, F-type ATPases have 2 components, F(1) - the catalytic core - and F(0) - the membrane proton channel. F(1) has five subunits: alpha(3), beta(3), gamma(1), delta(1), epsilon(1). F(0) has three main subunits: a(1), b(2) and c(10-14). The alpha and beta chains form an alternating ring which encloses part of the gamma chain. F(1) is attached to F(0) by a central stalk formed by the gamma and epsilon chains, while a peripheral stalk is formed by the delta and b chains.

It is found in the cell membrane. F(1)F(0) ATP synthase produces ATP from ADP in the presence of a proton or sodium gradient. F-type ATPases consist of two structural domains, F(1) containing the extramembraneous catalytic core and F(0) containing the membrane proton channel, linked together by a central stalk and a peripheral stalk. During catalysis, ATP synthesis in the catalytic domain of F(1) is coupled via a rotary mechanism of the central stalk subunits to proton translocation. Functionally, key component of the F(0) channel; it plays a direct role in translocation across the membrane. A homomeric c-ring of between 10-14 subunits forms the central stalk rotor element with the F(1) delta and epsilon subunits. The polypeptide is ATP synthase subunit c (Mesomycoplasma hyopneumoniae (strain 7448) (Mycoplasma hyopneumoniae)).